The chain runs to 447 residues: Rab GDP dissociation inhibitor alpha (447 aa).

S427 carries the post-translational modification Phosphoserine.

This sequence belongs to the Rab GDI family. As to quaternary structure, interacts with RHOH. Interacts with the non-phosphorylated forms of RAB1A, RAB3A, RAB5A, RAB5B, RAB5C, RAB8A, RAB8B, RAB10, RAB12, RAB35, and RAB43.

The protein localises to the cytoplasm. It is found in the golgi apparatus. It localises to the trans-Golgi network. Functionally, regulates the GDP/GTP exchange reaction of most Rab proteins by inhibiting the dissociation of GDP from them, and the subsequent binding of GTP to them. Promotes the dissociation of GDP-bound Rab proteins from the membrane and inhibits their activation. Promotes the dissociation of RAB1A, RAB3A, RAB5A and RAB10 from membranes. This is Rab GDP dissociation inhibitor alpha (GDI1) from Canis lupus familiaris (Dog).